Here is a 146-residue protein sequence, read N- to C-terminus: Hemoglobin subunit beta (146 aa).

Valine 1 bears the N-acetylvaline mark. The Globin domain maps to 2–146 (HLTAEEKDAV…VANALAHRYH (145 aa)). Serine 44 carries the phosphoserine modification. Position 59 is an N6-acetyllysine (lysine 59). Heme b is bound at residue histidine 63. Position 82 is an N6-acetyllysine (lysine 82). Histidine 92 serves as a coordination point for heme b. Cysteine 93 carries the S-nitrosocysteine modification.

It belongs to the globin family. Heterotetramer of two alpha chains and two beta chains. As to expression, red blood cells.

Functionally, involved in oxygen transport from the lung to the various peripheral tissues. The sequence is that of Hemoglobin subunit beta (HBB) from Hippopotamus amphibius (Hippopotamus).